The chain runs to 124 residues: Tax1-binding protein 3 (124 aa).

Position 2 is an N-acetylserine (Ser-2). Positions 15 to 112 (RVEIHKLRQG…EVVRLLVTRQ (98 aa)) constitute a PDZ domain. Position 61 is a phosphoserine (Ser-61).

In terms of assembly, interacts (via its PDZ domain) with GLS2. Interacts (via its PDZ domain) with RTKN (via the C-terminal region); this interaction facilitates Rho-mediated activation of the FOS serum response element (SRE). Interacts (via its PDZ domain) with CTNNB1; this interaction inhibits the transcriptional activity of CTNNB1. Interacts with HTLV-1 TAX protein. Interacts (via PDZ domain) with ARHGEF16. Interacts (via PDZ domain) with KCNJ4 (via C-terminus). Competes with LIN7A for KCNJ4 binding. Interacts with ADGRB2. Ubiquitous. Detected in brain, heart, kidney, lung, small intestine and skeletal muscle. Detected in various cell lines including HeLa. Weakly expressed in peripheral blood leukocytes.

It localises to the cytoplasm. The protein resides in the nucleus. The protein localises to the cell membrane. In terms of biological role, may regulate a number of protein-protein interactions by competing for PDZ domain binding sites. Binds CTNNB1 and may thereby act as an inhibitor of the Wnt signaling pathway. Competes with LIN7A for KCNJ4 binding, and thereby promotes KCNJ4 internalization. May play a role in the Rho signaling pathway. May play a role in activation of CDC42 by the viral protein HPV16 E6. The sequence is that of Tax1-binding protein 3 from Homo sapiens (Human).